The following is a 564-amino-acid chain: Chaperonin GroEL 2 (564 aa).

ATP-binding positions include 29–32 (TIGP), 86–90 (DGTTT), G413, and D493. The tract at residues 521-541 (DKPEPPAPAGDGGGDPMGGMG) is disordered. Over residues 530–541 (GDGGGDPMGGMG) the composition is skewed to gly residues.

This sequence belongs to the chaperonin (HSP60) family. Forms a cylinder of 14 subunits composed of two heptameric rings stacked back-to-back. Interacts with the co-chaperonin GroES.

It is found in the cytoplasm. The catalysed reaction is ATP + H2O + a folded polypeptide = ADP + phosphate + an unfolded polypeptide.. In terms of biological role, together with its co-chaperonin GroES, plays an essential role in assisting protein folding. The GroEL-GroES system forms a nano-cage that allows encapsulation of the non-native substrate proteins and provides a physical environment optimized to promote and accelerate protein folding. The polypeptide is Chaperonin GroEL 2 (Prochlorococcus marinus (strain MIT 9303)).